Here is a 149-residue protein sequence, read N- to C-terminus: Sex-regulated protein janus-A (149 aa).

Lys46 serves as a coordination point for substrate. His77 functions as the Proton acceptor in the catalytic mechanism. 118 to 120 provides a ligand contact to substrate; that stretch reads STG.

Belongs to the janus family.

In terms of biological role, janA and janB regulate somatic sex differentiation. In Drosophila pseudoobscura pseudoobscura (Fruit fly), this protein is Sex-regulated protein janus-A (janA).